Consider the following 147-residue polypeptide: UPF0179 protein MTH_609 (147 aa).

This sequence belongs to the UPF0179 family.

In Methanothermobacter thermautotrophicus (strain ATCC 29096 / DSM 1053 / JCM 10044 / NBRC 100330 / Delta H) (Methanobacterium thermoautotrophicum), this protein is UPF0179 protein MTH_609.